A 414-amino-acid polypeptide reads, in one-letter code: Zinc metalloproteinase-disintegrin-like batroxstatin-3 (414 aa).

Residues Asn-7 and Asn-70 are each glycosylated (N-linked (GlcNAc...) asparagine). Positions 10–204 constitute a Peptidase M12B domain; that stretch reads KYIKLVIVAD…HTPQCILNEP (195 aa). Disulfide bonds link Cys-121–Cys-199, Cys-161–Cys-183, and Cys-163–Cys-168. His-146 lines the Zn(2+) pocket. The active site involves Glu-147. Zn(2+) is bound by residues His-150 and His-156. A Disintegrin domain is found at 212-298; sequence PEVCGNYLLE…HCPTDRFHRN (87 aa). Ca(2+) is bound by residues Val-214, Asn-217, Glu-221, Glu-224, and Asp-227. Disulfide bonds link Cys-215/Cys-244, Cys-226/Cys-239, Cys-228/Cys-234, Cys-238/Cys-261, Cys-252/Cys-258, Cys-257/Cys-283, Cys-270/Cys-290, Cys-277/Cys-309, Cys-302/Cys-314, Cys-321/Cys-371, Cys-336/Cys-381, Cys-349/Cys-359, Cys-366/Cys-403, and Cys-397/Cys-408. The D/ECD-tripeptide motif lies at 276–278; it reads ECD. Ca(2+)-binding residues include Asp-278, Glu-281, Asp-293, and Arg-294.

It belongs to the venom metalloproteinase (M12B) family. P-III subfamily. P-IIIa sub-subfamily. In terms of assembly, monomer. Zn(2+) is required as a cofactor. In terms of tissue distribution, expressed by the venom gland.

It is found in the secreted. Its function is as follows. Snake venom zinc metalloprotease that induces apoptosis in vascular endothelial cells (VEC), without degrading the extracellular matrix (it cannot cleave collagen) or inhibiting adhesion of VEC. Has also fibrinogenolytic and hemorrhagic activities. In Bothrops atrox (Barba amarilla), this protein is Zinc metalloproteinase-disintegrin-like batroxstatin-3.